The following is a 166-amino-acid chain: Bacterial non-heme ferritin (166 aa).

The region spanning 2–145 is the Ferritin-like diiron domain; sequence LSKNLLEALN…THINYLTRIG (144 aa). Residues glutamate 17, glutamate 50, histidine 53, glutamate 94, and glutamine 127 each contribute to the Fe cation site.

The protein belongs to the ferritin family. Prokaryotic subfamily.

It localises to the cytoplasm. The enzyme catalyses 4 Fe(2+) + O2 + 6 H2O = 4 iron(III) oxide-hydroxide + 12 H(+). Functionally, iron-storage protein. This Staphylococcus aureus (strain USA300) protein is Bacterial non-heme ferritin (ftnA).